The chain runs to 181 residues: Phospholipase A2 inhibitor gamma subunit B (181 aa).

Intrachain disulfides connect cysteine 3/cysteine 27, cysteine 6/cysteine 13, cysteine 20/cysteine 48, cysteine 54/cysteine 75, cysteine 76/cysteine 81, cysteine 101/cysteine 126, cysteine 119/cysteine 146, and cysteine 152/cysteine 172.

It belongs to the CNF-like-inhibitor family. As to quaternary structure, heterotrimer of 2 subunits A and 1 subunit B. Expressed by the liver.

The protein resides in the secreted. In terms of biological role, strongly inhibits its own venom PLA2 and all other PLA2s tested including Elapid, Crotalid and Viperid venom PLA2s, as well as honeybee PLA2s. The chain is Phospholipase A2 inhibitor gamma subunit B from Laticauda semifasciata (Black-banded sea krait).